The chain runs to 159 residues: Endoribonuclease YbeY (159 aa).

Positions 120, 124, and 130 each coordinate Zn(2+).

It belongs to the endoribonuclease YbeY family. Zn(2+) is required as a cofactor.

Its subcellular location is the cytoplasm. Single strand-specific metallo-endoribonuclease involved in late-stage 70S ribosome quality control and in maturation of the 3' terminus of the 16S rRNA. The sequence is that of Endoribonuclease YbeY from Parafrankia sp. (strain EAN1pec).